A 479-amino-acid chain; its full sequence is Ribosomal RNA small subunit methyltransferase F (479 aa).

S-adenosyl-L-methionine contacts are provided by residues 125 to 131, Glu-149, Asp-176, and Asp-194; that span reads AAAPGSK. The Nucleophile role is filled by Cys-247.

This sequence belongs to the class I-like SAM-binding methyltransferase superfamily. RsmB/NOP family.

It is found in the cytoplasm. The enzyme catalyses cytidine(1407) in 16S rRNA + S-adenosyl-L-methionine = 5-methylcytidine(1407) in 16S rRNA + S-adenosyl-L-homocysteine + H(+). Specifically methylates the cytosine at position 1407 (m5C1407) of 16S rRNA. This is Ribosomal RNA small subunit methyltransferase F from Shigella boydii serotype 4 (strain Sb227).